Consider the following 393-residue polypeptide: Riboflavin biosynthesis protein RibBA (393 aa).

The tract at residues 1 to 200 (MQFDTIELAI…IKSLVAFRKA (200 aa)) is DHBP synthase. Residues 27 to 28 (RE), D32, 139 to 143 (RNGHT), and E163 contribute to the D-ribulose 5-phosphate site. E28 contributes to the Mg(2+) binding site. Residue H142 participates in Mg(2+) binding. The GTP cyclohydrolase II stretch occupies residues 201–393 (VELNVNLKAK…TKKNKMGHLI (193 aa)). Residue 249 to 253 (RMHSA) participates in GTP binding. Zn(2+)-binding residues include C254, C265, and C267. GTP-binding positions include Q270, 291 to 293 (EGR), and T313. D325 serves as the catalytic Proton acceptor; for GTP cyclohydrolase activity. R327 (nucleophile; for GTP cyclohydrolase activity) is an active-site residue. S348 and K353 together coordinate GTP.

In the N-terminal section; belongs to the DHBP synthase family. It in the C-terminal section; belongs to the GTP cyclohydrolase II family. The cofactor is Mg(2+). It depends on Mn(2+) as a cofactor. Requires Zn(2+) as cofactor.

The catalysed reaction is D-ribulose 5-phosphate = (2S)-2-hydroxy-3-oxobutyl phosphate + formate + H(+). It carries out the reaction GTP + 4 H2O = 2,5-diamino-6-hydroxy-4-(5-phosphoribosylamino)-pyrimidine + formate + 2 phosphate + 3 H(+). Its pathway is cofactor biosynthesis; riboflavin biosynthesis; 2-hydroxy-3-oxobutyl phosphate from D-ribulose 5-phosphate: step 1/1. The protein operates within cofactor biosynthesis; riboflavin biosynthesis; 5-amino-6-(D-ribitylamino)uracil from GTP: step 1/4. Its function is as follows. Catalyzes the conversion of D-ribulose 5-phosphate to formate and 3,4-dihydroxy-2-butanone 4-phosphate. Functionally, catalyzes the conversion of GTP to 2,5-diamino-6-ribosylamino-4(3H)-pyrimidinone 5'-phosphate (DARP), formate and pyrophosphate. This chain is Riboflavin biosynthesis protein RibBA, found in Staphylococcus epidermidis (strain ATCC 35984 / DSM 28319 / BCRC 17069 / CCUG 31568 / BM 3577 / RP62A).